The sequence spans 298 residues: Mitochondrial substrate carrier family protein N (298 aa).

The Mitochondrial intermembrane portion of the chain corresponds to 1-13 (MAGDLTPSLFLKY). 3 Solcar repeats span residues 8-92 (SLFL…FKKT), 104-188 (FRIP…TAEN), and 207-290 (QKLS…IKQM). A helical transmembrane segment spans residues 14–34 (GFGGALSCSITHSLVVPLDVV). At 35 to 60 (KTLLQTNPGKYTGMMNGFSTVIKEQG) the chain is on the mitochondrial matrix side. The chain crosses the membrane as a helical span at residues 61 to 81 (PSGLLQGLGPTAVGYALQGFL). At 82-105 (KFGFYEVFKKTYADAVGEKADQFR) the chain is on the mitochondrial intermembrane side. The helical transmembrane segment at 106–126 (IPIWLAASATAEVIADIALCP) threads the bilayer. Topologically, residues 127–162 (NEAVRIRLVAEPTFAKSPVEAFGKIFKQEGVLGFYK) are mitochondrial matrix. The chain crosses the membrane as a helical span at residues 163–179 (GLPPILLKQVPYTMAKF). Residues 180–208 (AVFEFTAENVYKGLAASGKPKESLTDGQK) lie on the Mitochondrial intermembrane side of the membrane. Residues 209-229 (LSVSLGSGIVAGIVAAIVSQP) form a helical membrane-spanning segment. Residues 230 to 262 (ADTILSKINQEKTDGGVVKAIGNIMRRLGVRGL) lie on the Mitochondrial matrix side of the membrane. A helical membrane pass occupies residues 263 to 283 (FLGLPTRCFMVGTLTAGQFFI). Residues 284–298 (YDGIKQMLGLTPAKK) are Mitochondrial intermembrane-facing.

This sequence belongs to the mitochondrial carrier (TC 2.A.29) family.

It localises to the mitochondrion inner membrane. Functionally, mitochondrial solute carriers shuttle metabolites, nucleotides, and cofactors through the mitochondrial inner membrane. Transports phosphate groups from the cytosol to the mitochondrial matrix. Phosphate is cotransported with H(+). This is Mitochondrial substrate carrier family protein N (mcfN) from Dictyostelium discoideum (Social amoeba).